The primary structure comprises 339 residues: N-acetyl-gamma-glutamyl-phosphate reductase 1 (339 aa).

Cysteine 149 is a catalytic residue.

This sequence belongs to the NAGSA dehydrogenase family. Type 1 subfamily.

The protein localises to the cytoplasm. The enzyme catalyses N-acetyl-L-glutamate 5-semialdehyde + phosphate + NADP(+) = N-acetyl-L-glutamyl 5-phosphate + NADPH + H(+). The protein operates within amino-acid biosynthesis; L-arginine biosynthesis; N(2)-acetyl-L-ornithine from L-glutamate: step 3/4. Its function is as follows. Catalyzes the NADPH-dependent reduction of N-acetyl-5-glutamyl phosphate to yield N-acetyl-L-glutamate 5-semialdehyde. In Lactiplantibacillus plantarum (strain ATCC BAA-793 / NCIMB 8826 / WCFS1) (Lactobacillus plantarum), this protein is N-acetyl-gamma-glutamyl-phosphate reductase 1.